Consider the following 368-residue polypeptide: 1-deoxy-D-xylulose 5-phosphate reductoisomerase (368 aa).

The NADPH site is built by T10, G11, S12, I13, Q38, and N100. A 1-deoxy-D-xylulose 5-phosphate-binding site is contributed by K101. An NADPH-binding site is contributed by E102. Position 125 (D125) interacts with Mn(2+). Residues S126, E127, S151, and H172 each coordinate 1-deoxy-D-xylulose 5-phosphate. E127 contacts Mn(2+). G178 contributes to the NADPH binding site. S185, N190, K191, and E194 together coordinate 1-deoxy-D-xylulose 5-phosphate. E194 provides a ligand contact to Mn(2+).

The protein belongs to the DXR family. Mg(2+) is required as a cofactor. Mn(2+) serves as cofactor.

The catalysed reaction is 2-C-methyl-D-erythritol 4-phosphate + NADP(+) = 1-deoxy-D-xylulose 5-phosphate + NADPH + H(+). Its pathway is isoprenoid biosynthesis; isopentenyl diphosphate biosynthesis via DXP pathway; isopentenyl diphosphate from 1-deoxy-D-xylulose 5-phosphate: step 1/6. Its function is as follows. Catalyzes the NADPH-dependent rearrangement and reduction of 1-deoxy-D-xylulose-5-phosphate (DXP) to 2-C-methyl-D-erythritol 4-phosphate (MEP). The sequence is that of 1-deoxy-D-xylulose 5-phosphate reductoisomerase from Tropheryma whipplei (strain Twist) (Whipple's bacillus).